Reading from the N-terminus, the 435-residue chain is GTPase Der (435 aa).

EngA-type G domains are found at residues 4-167 (PVVA…GDKA) and 175-350 (IRFS…ENQT). Residues 10-17 (GRPNVGKS), 57-61 (DTGGI), 119-122 (NKAD), 181-188 (GRPNVGKS), 228-232 (DTAGI), and 293-296 (NKWD) each bind GTP. The KH-like domain maps to 351-435 (RRIQSSVLND…PIKILARKRK (85 aa)).

This sequence belongs to the TRAFAC class TrmE-Era-EngA-EngB-Septin-like GTPase superfamily. EngA (Der) GTPase family. In terms of assembly, associates with the 50S ribosomal subunit.

Functionally, GTPase that plays an essential role in the late steps of ribosome biogenesis. This is GTPase Der from Lactobacillus johnsonii (strain CNCM I-12250 / La1 / NCC 533).